A 349-amino-acid polypeptide reads, in one-letter code: Terpene cyclase janA (349 aa).

An N-linked (GlcNAc...) asparagine glycan is attached at N80. The next 6 membrane-spanning stretches (helical) occupy residues 81–101 (LSLY…VIVL), 116–136 (LAFL…IPAI), 155–175 (IGFY…LAAL), 189–209 (LIAV…IIHY), 223–243 (IACA…LWFA), and 308–328 (VILI…VALL).

This sequence belongs to the membrane-bound ascI terpene cyclase family.

The protein resides in the membrane. It functions in the pathway secondary metabolite biosynthesis. Its function is as follows. Part of the gene cluster that mediates the biosynthesis of the indole diterpenes janthitremanes such as shearinine K or shearinine A. The geranylgeranyl diphosphate (GGPP) synthase janG catalyzes the first step in janthitremane biosynthesis via conversion of farnesyl pyrophosphate and isopentyl pyrophosphate into geranylgeranyl pyrophosphate (GGPP). Condensation of indole-3-glycerol phosphate with GGPP by the prenyl transferase janC then forms 3-geranylgeranylindole (3-GGI). Epoxidation by the FAD-dependent monooxygenase janM leads to a epoxidized-GGI that is substrate of the terpene cyclase janB for cyclization to yield paspaline. Paspaline is subsequently converted to 13-desoxypaspaline by the cytochrome P450 monooxygenase janP, via beta-PC-M6 in a series of alpha-face oxidations. The cytochrome P450 monooxygenase janQ is proposed to carry out sequential beta-face oxidation steps at C-7 and C-13 of 13-desoxypaspaline to form paspalicine and paspalinine respectively. The indole diterpene prenyltransferase janD may then convert paspalinine into shearinine K which is substrate of janO and/or additional enzymes for oxidation and cyclization to generate shearinine A. The protein is Terpene cyclase janA of Penicillium janthinellum (Penicillium vitale).